Consider the following 301-residue polypeptide: Quinolinate synthase (301 aa).

Iminosuccinate-binding residues include histidine 21 and serine 38. Cysteine 83 contributes to the [4Fe-4S] cluster binding site. Residues 109–111 and serine 126 each bind iminosuccinate; that span reads YIN. Cysteine 169 provides a ligand contact to [4Fe-4S] cluster. Residues 195–197 and threonine 212 contribute to the iminosuccinate site; that span reads HPE. Cysteine 257 serves as a coordination point for [4Fe-4S] cluster.

It belongs to the quinolinate synthase family. Type 2 subfamily. Requires [4Fe-4S] cluster as cofactor.

Its subcellular location is the cytoplasm. The catalysed reaction is iminosuccinate + dihydroxyacetone phosphate = quinolinate + phosphate + 2 H2O + H(+). It participates in cofactor biosynthesis; NAD(+) biosynthesis; quinolinate from iminoaspartate: step 1/1. In terms of biological role, catalyzes the condensation of iminoaspartate with dihydroxyacetone phosphate to form quinolinate. This Clostridium perfringens (strain SM101 / Type A) protein is Quinolinate synthase.